The following is a 251-amino-acid chain: MWIGVISLFPEMFRAITDYGVTGRAVKNGLLNVQYWSPRDFTYDRHRTVDDRPYGGGPGMLMMVQPLRDAIHAAKAAAGEGARVIYLSPQGRKLDQQGVRQLATNQKMILVCGRYEGIDERVIKTEIDEEWSIGDYVLSGGELPAMTLIDSVARFIPGVLGHQASAEEDSFADGLLDCPHFTRPEILEGMEVPAVLLSGNHAEIRRWRLKQSLGRTWLRRPELLKSLALTDEQTRLLAEFQREYQSEQQEY.

S-adenosyl-L-methionine contacts are provided by residues Gly-113 and Ile-133–Leu-138.

Belongs to the RNA methyltransferase TrmD family. Homodimer.

The protein resides in the cytoplasm. It catalyses the reaction guanosine(37) in tRNA + S-adenosyl-L-methionine = N(1)-methylguanosine(37) in tRNA + S-adenosyl-L-homocysteine + H(+). Functionally, specifically methylates guanosine-37 in various tRNAs. This Pectobacterium carotovorum subsp. carotovorum (strain PC1) protein is tRNA (guanine-N(1)-)-methyltransferase.